Here is a 329-residue protein sequence, read N- to C-terminus: Chlorophyllase-1, chloroplastic (329 aa).

A chloroplast-targeting transit peptide spans 1–21 (MAAMVDAKPAASVQGTPLLAT). A GXSXG motif is present at residues 145–149 (GHSRG). The Nucleophile role is filled by serine 147. Catalysis depends on charge relay system residues aspartate 169 and histidine 242.

The protein belongs to the AB hydrolase superfamily. Lipase family.

Its subcellular location is the plastid. The protein localises to the chloroplast. It carries out the reaction a chlorophyll + H2O = a chlorophyllide + phytol + H(+). The protein operates within porphyrin-containing compound metabolism; chlorophyll degradation. Functionally, catalyzes the hydrolysis of ester bond in chlorophyll to yield chlorophyllide and phytol. The polypeptide is Chlorophyllase-1, chloroplastic (CHLASE1) (Citrus sinensis (Sweet orange)).